A 500-amino-acid chain; its full sequence is Nitrate/nitrite transporter NrtP (500 aa).

12 consecutive transmembrane segments (helical) span residues 19–39 (WFAF…ATTI), 52–72 (TLGI…GMLL), 79–99 (ITYS…ALAQ), 109–129 (LLMG…AEWF), 147–167 (FGAF…SFFS), 175–195 (LAIA…YNTV), 220–240 (SFWA…LLAW), 247–267 (IHFL…GLFA), 364–384 (WTMT…HFIN), 389–409 (IPVA…GCGA), 425–445 (IAGN…TIFS), and 451–471 (TLFS…AFFL).

This sequence belongs to the major facilitator superfamily. Nitrate/nitrite porter (TC 2.A.1.8) family.

It is found in the cell inner membrane. Its function is as follows. Transport system for both nitrate and nitrite, with much higher affinity for nitrate than for nitrite. This is Nitrate/nitrite transporter NrtP from Nostoc punctiforme (strain ATCC 29133 / PCC 73102).